We begin with the raw amino-acid sequence, 146 residues long: Protein translocase subunit SecE (146 aa).

Residues 1 to 81 (MSDERYAASD…KVKKPKKSAD (81 aa)) form a disordered region. Gly residues predominate over residues 10–20 (DGGGTEVGSGT). A compositionally biased stretch (polar residues) spans 45–54 (RAANASNTGA). Residues 69–81 (KEGKVKKPKKSAD) show a composition bias toward basic and acidic residues. A helical membrane pass occupies residues 118-138 (VVLAFLAFMVALVGLADFGLA).

Belongs to the SecE/SEC61-gamma family. Component of the Sec protein translocase complex. Heterotrimer consisting of SecY, SecE and SecG subunits. The heterotrimers can form oligomers, although 1 heterotrimer is thought to be able to translocate proteins. Interacts with the ribosome. Interacts with SecDF, and other proteins may be involved. Interacts with SecA.

It localises to the cell membrane. Functionally, essential subunit of the Sec protein translocation channel SecYEG. Clamps together the 2 halves of SecY. May contact the channel plug during translocation. This chain is Protein translocase subunit SecE, found in Mycobacterium leprae (strain TN).